The primary structure comprises 183 residues: ER membrane protein complex subunit 4 (183 aa).

Thr-2 carries the post-translational modification N-acetylthreonine. The Cytoplasmic portion of the chain corresponds to 2–66 (TAQGGLVANR…VQETDRILVE (65 aa)). The segment at 20–39 (ELSGPGGGSRGRSDRGSGQG) is disordered. Ser-36 is modified (phosphoserine). The helical transmembrane segment at 67–87 (KRCWDIALGPLKQIPMNLFIM) threads the bilayer. At 88-98 (YMAGNTISIFP) the chain is on the lumenal side. Residues 99-120 (TMMVCMMAWRPIQALMAISATF) traverse the membrane as a helical segment. The Cytoplasmic portion of the chain corresponds to 121 to 127 (KMLESSS). A helical transmembrane segment spans residues 128 to 148 (QKFLQGLVYLIGNLMGLALAV). Topologically, residues 149 to 183 (YKCQSMGLLPTHASDWLAFIEPPERMEFSGGGLLL) are lumenal.

It belongs to the EMC4 family. Component of the ER membrane protein complex (EMC). As to expression, isoform 1 is expressed in brain and heart. Isoform 2 is expressed in heart.

The protein localises to the endoplasmic reticulum membrane. Part of the endoplasmic reticulum membrane protein complex (EMC) that enables the energy-independent insertion into endoplasmic reticulum membranes of newly synthesized membrane proteins. Preferentially accommodates proteins with transmembrane domains that are weakly hydrophobic or contain destabilizing features such as charged and aromatic residues. Involved in the cotranslational insertion of multi-pass membrane proteins in which stop-transfer membrane-anchor sequences become ER membrane spanning helices. It is also required for the post-translational insertion of tail-anchored/TA proteins in endoplasmic reticulum membranes. By mediating the proper cotranslational insertion of N-terminal transmembrane domains in an N-exo topology, with translocated N-terminus in the lumen of the ER, controls the topology of multi-pass membrane proteins like the G protein-coupled receptors. By regulating the insertion of various proteins in membranes, it is indirectly involved in many cellular processes. This is ER membrane protein complex subunit 4 (EMC4) from Homo sapiens (Human).